A 396-amino-acid chain; its full sequence is Elongation factor Tu (396 aa).

The 197-residue stretch at 10–206 (KPHVNVGTIG…AMDEYIPTPE (197 aa)) folds into the tr-type G domain. A G1 region spans residues 19-26 (GHVDHGKT). A GTP-binding site is contributed by 19–26 (GHVDHGKT). T26 lines the Mg(2+) pocket. The G2 stretch occupies residues 60–64 (GITIA). The G3 stretch occupies residues 81–84 (DCPG). Residues 81–85 (DCPGH) and 136–139 (NKAD) each bind GTP. A G4 region spans residues 136-139 (NKAD). Residues 174–176 (SAL) are G5.

Belongs to the TRAFAC class translation factor GTPase superfamily. Classic translation factor GTPase family. EF-Tu/EF-1A subfamily. In terms of assembly, monomer.

The protein resides in the cytoplasm. The catalysed reaction is GTP + H2O = GDP + phosphate + H(+). GTP hydrolase that promotes the GTP-dependent binding of aminoacyl-tRNA to the A-site of ribosomes during protein biosynthesis. The sequence is that of Elongation factor Tu from Alkalilimnicola ehrlichii (strain ATCC BAA-1101 / DSM 17681 / MLHE-1).